Consider the following 805-residue polypeptide: MSKFFVNVAPINNSNSSSSHTTTSSNTQRHQQHQQHYGGSGTTGHTMVARRLNYDLHGGTTSINNNNNIVIKNESVDLDYDHVLSSSDSNSNGGVAAHLRDHVYISLDKGHNTGAVATAAAAATAGHTQQQLQQQHHHQNQQQRKATGKSNDITNYYKVKRRPHAVSDEIHPKKQAKQSAHHQTVYQKHTASSAPQQLRHSHHQLRHDADAELDEDVVERVAKPASHHPFSLSTPQQQLAASVASSSSSGDRNRADTSLGILTKKFVDLLQESPDGVVDLNEASNRLHVQKRRIYDITNVLEGINILEKKSKNNIQWRCGQSMVSQERSRHIEADSLRLEQQENELNKAIDLMRENLAEISQEVENSGGMAYVTQNDLLNVDLFKDQIVIVIKAPPEAKLVLPNTKLPREIYVKAENSGEINVFLCHDTSPENSPIAPGAGYVGAPGAGCVRTATSTRLHPLTNQRLNDPLFNNIDAMSTKGLFQTPYRSARNLSKSIEEAAKQSQPEYNNICDIAMGQHHNLNQQQQQQQQQLLQQPEEDDVDVELNQLVPTLTNPVVRTHQFQQHQQPSIQELFSSLTESSPPTPTKRRREAAAAAIAAGSSTTATTTLNSHNNRNHSNHSNHSNHSSSNNSKSQPPTIGYGSSQRRSDVPMYNCAMEGATTTSATADTTAATSRSAAASSLQMQFAAVAESNNGSSSGGGGGGGGYGSIAGAGANADPHQPYSHDRNSLPPGVADCDANSNSSSVTLQGLDALFNDIGSDYFSNDIAFVSINPPDDNDYPYALNANEGIDRLFDFGSDAYGP.

Disordered regions lie at residues 9 to 45 (APINNSNSSSSHTTTSSNTQRHQQHQQHYGGSGTTGH), 119 to 208 (AAAA…LRHD), and 224 to 255 (PASHHPFSLSTPQQQLAASVASSSSSGDRNRA). 2 stretches are compositionally biased toward low complexity: residues 12–37 (NNSNSSSSHTTTSSNTQRHQQHQQHY) and 119–134 (AAAAATAGHTQQQLQQ). Composition is skewed to polar residues over residues 144 to 154 (RKATGKSNDIT) and 181 to 195 (HHQTVYQKHTASSAP). The PIP-box K+4 motif signature appears at 147 to 161 (TGKSNDITNYYKVKR). The segment covering 240–249 (AASVASSSSS) has biased composition (low complexity). The DNA-binding element occupies 253–318 (NRADTSLGIL…KKSKNNIQWR (66 aa)). The tract at residues 318 to 411 (RCGQSMVSQE…LPNTKLPREI (94 aa)) is dimerization. The residue at position 434 (S434) is a Phosphoserine. 2 disordered regions span residues 578 to 650 (SLTE…QRRS) and 714 to 743 (GAGANADPHQPYSHDRNSLPPGVADCDANS). 2 stretches are compositionally biased toward low complexity: residues 595 to 615 (AAAAIAAGSSTTATTTLNSHN) and 623 to 636 (SNHSNHSSSNNSKS). Residues 637–647 (QPPTIGYGSSQ) are compositionally biased toward polar residues.

This sequence belongs to the E2F/DP family. In terms of assembly, heterodimer of E2f and Dp. Cooperates to give sequence-specific DNA binding and optimal trans-activation. Interacts with PCNA. In terms of processing, ubiquitinated by the DCX(DTL) complex, also named CRL4(CDT2) complex, leading to its degradation during S phase. Ubiquitination by the DCX(DTL) complex is essential for cell cycle control and is PCNA-dependent: interacts with PCNA via its PIP-box, while the presence of the containing the 'K+4' motif in the PIP box, recruit the DCX(DTL) complex, leading to its degradation. In terms of tissue distribution, segmentally repeated expression throughout early embryos is restricted to the ventral nerve cord in later embryos.

It is found in the nucleus. In terms of biological role, transcriptional activator that binds to E2f sites. Required for wild-type growth in mitotic and polytene tissues, Contributes to the expression of replication genes at the G1-S transition and Cyclin E. Activates cell proliferation in wing imaginal disk, which requires expression of vg. In Drosophila melanogaster (Fruit fly), this protein is Transcription factor E2f1.